A 118-amino-acid polypeptide reads, in one-letter code: UPF0102 protein Cphy_2398 (118 aa).

It belongs to the UPF0102 family.

In Lachnoclostridium phytofermentans (strain ATCC 700394 / DSM 18823 / ISDg) (Clostridium phytofermentans), this protein is UPF0102 protein Cphy_2398.